The following is a 314-amino-acid chain: 4-hydroxy-3-methylbut-2-enyl diphosphate reductase (314 aa).

C12 is a binding site for [4Fe-4S] cluster. (2E)-4-hydroxy-3-methylbut-2-enyl diphosphate-binding residues include H41 and H74. Positions 41 and 74 each coordinate dimethylallyl diphosphate. Residues H41 and H74 each contribute to the isopentenyl diphosphate site. C96 contributes to the [4Fe-4S] cluster binding site. Residue H124 participates in (2E)-4-hydroxy-3-methylbut-2-enyl diphosphate binding. Position 124 (H124) interacts with dimethylallyl diphosphate. H124 is a binding site for isopentenyl diphosphate. The active-site Proton donor is E126. T167 is a (2E)-4-hydroxy-3-methylbut-2-enyl diphosphate binding site. C197 provides a ligand contact to [4Fe-4S] cluster. Residues S225, S226, N227, and S269 each contribute to the (2E)-4-hydroxy-3-methylbut-2-enyl diphosphate site. Residues S225, S226, N227, and S269 each contribute to the dimethylallyl diphosphate site. Positions 225, 226, 227, and 269 each coordinate isopentenyl diphosphate.

The protein belongs to the IspH family. The cofactor is [4Fe-4S] cluster.

It carries out the reaction isopentenyl diphosphate + 2 oxidized [2Fe-2S]-[ferredoxin] + H2O = (2E)-4-hydroxy-3-methylbut-2-enyl diphosphate + 2 reduced [2Fe-2S]-[ferredoxin] + 2 H(+). The enzyme catalyses dimethylallyl diphosphate + 2 oxidized [2Fe-2S]-[ferredoxin] + H2O = (2E)-4-hydroxy-3-methylbut-2-enyl diphosphate + 2 reduced [2Fe-2S]-[ferredoxin] + 2 H(+). It participates in isoprenoid biosynthesis; dimethylallyl diphosphate biosynthesis; dimethylallyl diphosphate from (2E)-4-hydroxy-3-methylbutenyl diphosphate: step 1/1. Its pathway is isoprenoid biosynthesis; isopentenyl diphosphate biosynthesis via DXP pathway; isopentenyl diphosphate from 1-deoxy-D-xylulose 5-phosphate: step 6/6. Functionally, catalyzes the conversion of 1-hydroxy-2-methyl-2-(E)-butenyl 4-diphosphate (HMBPP) into a mixture of isopentenyl diphosphate (IPP) and dimethylallyl diphosphate (DMAPP). Acts in the terminal step of the DOXP/MEP pathway for isoprenoid precursor biosynthesis. The sequence is that of 4-hydroxy-3-methylbut-2-enyl diphosphate reductase from Haemophilus ducreyi (strain 35000HP / ATCC 700724).